A 215-amino-acid chain; its full sequence is Uracil phosphoribosyltransferase (215 aa).

5-phospho-alpha-D-ribose 1-diphosphate contacts are provided by residues arginine 84, arginine 109, and aspartate 136–threonine 144. Residues isoleucine 198 and glycine 203–alanine 205 contribute to the uracil site. Aspartate 204 is a 5-phospho-alpha-D-ribose 1-diphosphate binding site.

It belongs to the UPRTase family. The cofactor is Mg(2+).

The catalysed reaction is UMP + diphosphate = 5-phospho-alpha-D-ribose 1-diphosphate + uracil. It functions in the pathway pyrimidine metabolism; UMP biosynthesis via salvage pathway; UMP from uracil: step 1/1. Its activity is regulated as follows. Allosterically activated by GTP. Catalyzes the conversion of uracil and 5-phospho-alpha-D-ribose 1-diphosphate (PRPP) to UMP and diphosphate. The sequence is that of Uracil phosphoribosyltransferase from Methanothermobacter thermautotrophicus (strain ATCC 29096 / DSM 1053 / JCM 10044 / NBRC 100330 / Delta H) (Methanobacterium thermoautotrophicum).